The following is a 511-amino-acid chain: Xylose import ATP-binding protein XylG (511 aa).

ABC transporter domains lie at 6–244 (LEMR…VGRE) and 261–506 (FEAR…IGKP).

This sequence belongs to the ABC transporter superfamily. Xylose importer (TC 3.A.1.2.4) family. The complex is composed of two ATP-binding proteins (XylG), two transmembrane proteins (XylH) and a solute-binding protein (XylF).

It is found in the cell inner membrane. The catalysed reaction is D-xylose(out) + ATP + H2O = D-xylose(in) + ADP + phosphate + H(+). Its function is as follows. Part of the ABC transporter complex XylFGH involved in xylose import. Responsible for energy coupling to the transport system. The sequence is that of Xylose import ATP-binding protein XylG from Brucella melitensis biotype 1 (strain ATCC 23456 / CCUG 17765 / NCTC 10094 / 16M).